A 188-amino-acid polypeptide reads, in one-letter code: Acireductone dioxygenase (188 aa).

The disordered stretch occupies residues methionine 1 to arginine 20. Residues histidine 97, histidine 99, glutamate 103, and histidine 141 each coordinate Fe(2+). 4 residues coordinate Ni(2+): histidine 97, histidine 99, glutamate 103, and histidine 141.

It belongs to the acireductone dioxygenase (ARD) family. Monomer. The cofactor is Fe(2+). Ni(2+) serves as cofactor.

The enzyme catalyses 1,2-dihydroxy-5-(methylsulfanyl)pent-1-en-3-one + O2 = 3-(methylsulfanyl)propanoate + CO + formate + 2 H(+). It carries out the reaction 1,2-dihydroxy-5-(methylsulfanyl)pent-1-en-3-one + O2 = 4-methylsulfanyl-2-oxobutanoate + formate + 2 H(+). It participates in amino-acid biosynthesis; L-methionine biosynthesis via salvage pathway; L-methionine from S-methyl-5-thio-alpha-D-ribose 1-phosphate: step 5/6. In terms of biological role, catalyzes 2 different reactions between oxygen and the acireductone 1,2-dihydroxy-3-keto-5-methylthiopentene (DHK-MTPene) depending upon the metal bound in the active site. Fe-containing acireductone dioxygenase (Fe-ARD) produces formate and 2-keto-4-methylthiobutyrate (KMTB), the alpha-ketoacid precursor of methionine in the methionine recycle pathway. Ni-containing acireductone dioxygenase (Ni-ARD) produces methylthiopropionate, carbon monoxide and formate, and does not lie on the methionine recycle pathway. This is Acireductone dioxygenase from Xanthomonas campestris pv. campestris (strain 8004).